The following is a 364-amino-acid chain: Ferrochelatase (364 aa).

Fe cation-binding residues include H210 and E291.

It belongs to the ferrochelatase family.

Its subcellular location is the cytoplasm. It carries out the reaction heme b + 2 H(+) = protoporphyrin IX + Fe(2+). Its pathway is porphyrin-containing compound metabolism; protoheme biosynthesis; protoheme from protoporphyrin-IX: step 1/1. Functionally, catalyzes the ferrous insertion into protoporphyrin IX. The protein is Ferrochelatase of Idiomarina loihiensis (strain ATCC BAA-735 / DSM 15497 / L2-TR).